The primary structure comprises 351 residues: MKNKKRVLIASSLSCAILLLSAATTQANSAHKDSQDQNKKEHVDKSQQKDKRNVTNKDKNSTAPDDIGKNGKITKRTETVYDEKTNILQNLQFDFIDDPTYDKNVLLVKKQGSIHSNLKFESHKEEKNSNWLKYPSEYHVDFQVKRNRKTEILDQLPKNKISTAKVDSTFSYSSGGKFDSTKGIGRTSSNSYSKTISYNQQNYDTIASGKNNNWHVHWSVIANDLKYGGEVKNRNDELLFYRNTRIATVENPELSFASKYRYPALVRSGFNPEFLTYLSNEKSNEKTQFEVTYTRNQDILKNRPGIHYAPPILEKNKDGQRLIVTYEVDWKNKTVKVVDKYSDDNKPYKEG.

An N-terminal signal peptide occupies residues 1–27 (MKNKKRVLIASSLSCAILLLSAATTQA). The interval 27–71 (ANSAHKDSQDQNKKEHVDKSQQKDKRNVTNKDKNSTAPDDIGKNG) is disordered. The span at 30 to 60 (AHKDSQDQNKKEHVDKSQQKDKRNVTNKDKN) shows a compositional bias: basic and acidic residues.

Belongs to the aerolysin family.

This is an uncharacterized protein from Staphylococcus aureus (strain USA300).